We begin with the raw amino-acid sequence, 480 residues long: Reticulophagy regulator 1 (480 aa).

Residues 1–10 (MASPAPEEHA) are compositionally biased toward basic and acidic residues. Residues 1-41 (MASPAPEEHATQGCPATEEQEPRPGVPGEEAGPEGAGPQVE) form a disordered region. The Cytoplasmic segment spans residues 1-43 (MASPAPEEHATQGCPATEEQEPRPGVPGEEAGPEGAGPQVEEA). Residues 44-64 (AGRVAAALTWLLGEPVLWLGW) form a helical membrane-spanning segment. Topologically, residues 65 to 78 (RADELLSWKRPLRS) are lumenal. Residues 67-216 (DELLSWKRPL…LLFAFLCPLF (150 aa)) form a reticulon homology domain region. Residues 79–99 (LLAFLGANLLFWFLALTPWRV) form a helical membrane-spanning segment. At 100 to 101 (YH) the chain is on the cytoplasmic side. A helical transmembrane segment spans residues 102 to 122 (LISVMILGRVIMQIIKDMVLS). At 123-191 (RARGAQLWRS…LVCSVCTFFT (69 aa)) the chain is on the lumenal side. Residue Ser132 is modified to Phosphoserine. Ser134 is subject to Phosphoserine; by CAMK2B. Residue Ser136 is modified to Phosphoserine. A helical membrane pass occupies residues 192–212 (ILGSYIPGVILSYLLLLFAFL). Topologically, residues 213-480 (CPLFKCNDIG…GFLSNLLGGH (268 aa)) are cytoplasmic. Residues 302–313 (FNLSEGYTPQTD) show a composition bias toward polar residues. The segment at 302–348 (FNLSEGYTPQTDTSDDLDRPSEEVFSRDLSDFPSLENGAGTNDEDEL) is disordered. Residues 317–331 (DLDRPSEEVFSRDLS) show a composition bias toward basic and acidic residues. The LIR motif signature appears at 436–441 (DDFELL). Positions 450 to 480 (ESELGLTQDQGAEAQQSKKSSGFLSNLLGGH) are disordered. Over residues 454-473 (GLTQDQGAEAQQSKKSSGFL) the composition is skewed to polar residues.

This sequence belongs to the RETREG family. As to quaternary structure, homooligomer; oligomerization is enhanced following endoplasmic reticulum stress and is mediated by the reticulon homology domain. Interacts with ATG8 family modifier proteins MAP1LC3A, MAP1LC3B, GABARAP, GABARAPL1 and GABARAPL2. Phosphorylation at Ser-134 by CAMK2B enhances oligomerization and membrane scission and reticulophagy activity.

Its subcellular location is the golgi apparatus. It is found in the cis-Golgi network membrane. The protein localises to the endoplasmic reticulum membrane. Endoplasmic reticulum (ER)-anchored autophagy regulator which mediates ER delivery into lysosomes through sequestration into autophagosomes. Promotes membrane remodeling and ER scission via its membrane bending capacity and targets the fragments into autophagosomes via interaction with ATG8 family proteins. Active under basal conditions. Required for collagen quality control in a LIR motif-dependent manner. Required for long-term survival of nociceptive and autonomic ganglion neurons. This Rattus norvegicus (Rat) protein is Reticulophagy regulator 1.